The primary structure comprises 257 residues: Imidazole glycerol phosphate synthase subunit HisF (257 aa).

Active-site residues include Asp-11 and Asp-130.

It belongs to the HisA/HisF family. As to quaternary structure, heterodimer of HisH and HisF.

It localises to the cytoplasm. The catalysed reaction is 5-[(5-phospho-1-deoxy-D-ribulos-1-ylimino)methylamino]-1-(5-phospho-beta-D-ribosyl)imidazole-4-carboxamide + L-glutamine = D-erythro-1-(imidazol-4-yl)glycerol 3-phosphate + 5-amino-1-(5-phospho-beta-D-ribosyl)imidazole-4-carboxamide + L-glutamate + H(+). The protein operates within amino-acid biosynthesis; L-histidine biosynthesis; L-histidine from 5-phospho-alpha-D-ribose 1-diphosphate: step 5/9. IGPS catalyzes the conversion of PRFAR and glutamine to IGP, AICAR and glutamate. The HisF subunit catalyzes the cyclization activity that produces IGP and AICAR from PRFAR using the ammonia provided by the HisH subunit. This Shewanella denitrificans (strain OS217 / ATCC BAA-1090 / DSM 15013) protein is Imidazole glycerol phosphate synthase subunit HisF.